Here is a 263-residue protein sequence, read N- to C-terminus: Putative ankyrin repeat domain-containing protein 20A12 pseudogene (263 aa).

Coiled-coil stretches lie at residues 65–121 (KKDL…MLES) and 171–263 (NQVF…IQLH).

This is Putative ankyrin repeat domain-containing protein 20A12 pseudogene from Homo sapiens (Human).